A 142-amino-acid polypeptide reads, in one-letter code: Putative pre-16S rRNA nuclease (142 aa).

The protein belongs to the YqgF nuclease family.

It is found in the cytoplasm. Functionally, could be a nuclease involved in processing of the 5'-end of pre-16S rRNA. In Photobacterium profundum (strain SS9), this protein is Putative pre-16S rRNA nuclease.